Consider the following 220-residue polypeptide: NAD(P)H-hydrate epimerase (220 aa).

One can recognise a YjeF N-terminal domain in the interval Ala6–His203. Position 53–57 (His53–Val57) interacts with (6S)-NADPHX. The K(+) site is built by Asn54 and Asp116. Residues Gly120 to Pro126 and Asp149 contribute to the (6S)-NADPHX site. Thr152 contacts K(+).

Belongs to the NnrE/AIBP family. It depends on K(+) as a cofactor.

It catalyses the reaction (6R)-NADHX = (6S)-NADHX. The enzyme catalyses (6R)-NADPHX = (6S)-NADPHX. Functionally, catalyzes the epimerization of the S- and R-forms of NAD(P)HX, a damaged form of NAD(P)H that is a result of enzymatic or heat-dependent hydration. This is a prerequisite for the S-specific NAD(P)H-hydrate dehydratase to allow the repair of both epimers of NAD(P)HX. This Truepera radiovictrix (strain DSM 17093 / CIP 108686 / LMG 22925 / RQ-24) protein is NAD(P)H-hydrate epimerase.